A 184-amino-acid chain; its full sequence is Large ribosomal subunit protein uL5 (184 aa).

This sequence belongs to the universal ribosomal protein uL5 family. In terms of assembly, part of the 50S ribosomal subunit; part of the 5S rRNA/L5/L18/L25 subcomplex. Contacts the 5S rRNA and the P site tRNA. Forms a bridge to the 30S subunit in the 70S ribosome.

This is one of the proteins that bind and probably mediate the attachment of the 5S RNA into the large ribosomal subunit, where it forms part of the central protuberance. In the 70S ribosome it contacts protein S13 of the 30S subunit (bridge B1b), connecting the 2 subunits; this bridge is implicated in subunit movement. Contacts the P site tRNA; the 5S rRNA and some of its associated proteins might help stabilize positioning of ribosome-bound tRNAs. This is Large ribosomal subunit protein uL5 from Syntrophotalea carbinolica (strain DSM 2380 / NBRC 103641 / GraBd1) (Pelobacter carbinolicus).